Consider the following 291-residue polypeptide: Pyridoxal 5'-phosphate synthase subunit PdxS (291 aa).

Asp-23 is a D-ribose 5-phosphate binding site. Lys-80 functions as the Schiff-base intermediate with D-ribose 5-phosphate in the catalytic mechanism. Position 152 (Gly-152) interacts with D-ribose 5-phosphate. Arg-164 contributes to the D-glyceraldehyde 3-phosphate binding site. Residues Gly-213 and 234 to 235 (GS) each bind D-ribose 5-phosphate.

It belongs to the PdxS/SNZ family. In the presence of PdxT, forms a dodecamer of heterodimers.

The enzyme catalyses aldehydo-D-ribose 5-phosphate + D-glyceraldehyde 3-phosphate + L-glutamine = pyridoxal 5'-phosphate + L-glutamate + phosphate + 3 H2O + H(+). Its pathway is cofactor biosynthesis; pyridoxal 5'-phosphate biosynthesis. Functionally, catalyzes the formation of pyridoxal 5'-phosphate from ribose 5-phosphate (RBP), glyceraldehyde 3-phosphate (G3P) and ammonia. The ammonia is provided by the PdxT subunit. Can also use ribulose 5-phosphate and dihydroxyacetone phosphate as substrates, resulting from enzyme-catalyzed isomerization of RBP and G3P, respectively. The sequence is that of Pyridoxal 5'-phosphate synthase subunit PdxS from Desulfitobacterium hafniense (strain DSM 10664 / DCB-2).